The primary structure comprises 344 residues: Ferrochelatase (344 aa).

Fe cation is bound by residues H211 and E292.

Belongs to the ferrochelatase family.

The protein localises to the cytoplasm. The enzyme catalyses heme b + 2 H(+) = protoporphyrin IX + Fe(2+). Its pathway is porphyrin-containing compound metabolism; protoheme biosynthesis; protoheme from protoporphyrin-IX: step 1/1. Its function is as follows. Catalyzes the ferrous insertion into protoporphyrin IX. In Methylobacillus flagellatus (strain ATCC 51484 / DSM 6875 / VKM B-1610 / KT), this protein is Ferrochelatase.